Reading from the N-terminus, the 275-residue chain is 2,3,4,5-tetrahydropyridine-2,6-dicarboxylate N-succinyltransferase (275 aa).

2 residues coordinate substrate: Arg-106 and Asp-143.

The protein belongs to the transferase hexapeptide repeat family. In terms of assembly, homotrimer.

It localises to the cytoplasm. It catalyses the reaction (S)-2,3,4,5-tetrahydrodipicolinate + succinyl-CoA + H2O = (S)-2-succinylamino-6-oxoheptanedioate + CoA. Its pathway is amino-acid biosynthesis; L-lysine biosynthesis via DAP pathway; LL-2,6-diaminopimelate from (S)-tetrahydrodipicolinate (succinylase route): step 1/3. The chain is 2,3,4,5-tetrahydropyridine-2,6-dicarboxylate N-succinyltransferase from Rickettsia bellii (strain RML369-C).